The following is a 126-amino-acid chain: DNA-directed RNA polymerase subunit omega (126 aa).

This sequence belongs to the RNA polymerase subunit omega family. As to quaternary structure, the RNAP catalytic core consists of 2 alpha, 1 beta, 1 beta' and 1 omega subunit. When a sigma factor is associated with the core the holoenzyme is formed, which can initiate transcription.

The enzyme catalyses RNA(n) + a ribonucleoside 5'-triphosphate = RNA(n+1) + diphosphate. Functionally, promotes RNA polymerase assembly. Latches the N- and C-terminal regions of the beta' subunit thereby facilitating its interaction with the beta and alpha subunits. The chain is DNA-directed RNA polymerase subunit omega from Rickettsia felis (strain ATCC VR-1525 / URRWXCal2) (Rickettsia azadi).